The following is a 210-amino-acid chain: Thymidylate kinase (210 aa).

10-17 (GPEGAGKS) contributes to the ATP binding site.

Belongs to the thymidylate kinase family.

It carries out the reaction dTMP + ATP = dTDP + ADP. Functionally, phosphorylation of dTMP to form dTDP in both de novo and salvage pathways of dTTP synthesis. This is Thymidylate kinase from Pseudomonas paraeruginosa (strain DSM 24068 / PA7) (Pseudomonas aeruginosa (strain PA7)).